The chain runs to 170 residues: MSKNVGKLVKIWNESEVLVDRKSKFQARCCPLQNQKDIPSILQELTQNNKSVSKASHMHMYAWRTAEVSNNLHLQQEQKKKGNKANKSNNSHVNKSRNITVQPKNIEQGCADCGEAGAGQRLLTLLERANIFNVLVIVTRWYGGTPLGSSRFRHISTCAVETLKKGGFLP.

The tract at residues 79 to 98 is disordered; it reads KKKGNKANKSNNSHVNKSRN.

Belongs to the IMPACT family.

This Saccharomyces cerevisiae (strain ATCC 204508 / S288c) (Baker's yeast) protein is IMPACT family member YDL177C.